Here is a 414-residue protein sequence, read N- to C-terminus: Glutamyl-tRNA reductase (414 aa).

Substrate-binding positions include 49 to 52 (TCNR), Ser-108, 113 to 115 (EPQ), and Gln-119. The Nucleophile role is filled by Cys-50. 188–193 (GAGQTG) contributes to the NADP(+) binding site.

Belongs to the glutamyl-tRNA reductase family. As to quaternary structure, homodimer.

It carries out the reaction (S)-4-amino-5-oxopentanoate + tRNA(Glu) + NADP(+) = L-glutamyl-tRNA(Glu) + NADPH + H(+). It functions in the pathway porphyrin-containing compound metabolism; protoporphyrin-IX biosynthesis; 5-aminolevulinate from L-glutamyl-tRNA(Glu): step 1/2. Its function is as follows. Catalyzes the NADPH-dependent reduction of glutamyl-tRNA(Glu) to glutamate 1-semialdehyde (GSA). The polypeptide is Glutamyl-tRNA reductase (Francisella tularensis subsp. holarctica (strain FTNF002-00 / FTA)).